Consider the following 238-residue polypeptide: Ribosomal RNA small subunit methyltransferase I (238 aa).

Belongs to the methyltransferase superfamily. RsmI family.

The protein resides in the cytoplasm. The enzyme catalyses cytidine(1402) in 16S rRNA + S-adenosyl-L-methionine = 2'-O-methylcytidine(1402) in 16S rRNA + S-adenosyl-L-homocysteine + H(+). Functionally, catalyzes the 2'-O-methylation of the ribose of cytidine 1402 (C1402) in 16S rRNA. This chain is Ribosomal RNA small subunit methyltransferase I, found in Mesomycoplasma conjunctivae (strain ATCC 25834 / NCTC 10147 / HRC/581) (Mycoplasma conjunctivae).